Consider the following 195-residue polypeptide: Inhibitor of glycogen debranching 1 (195 aa).

Residues 1–18 show a composition bias toward polar residues; sequence MTDPHLNTPQVSTSPTFE. The tract at residues 1 to 101 is disordered; sequence MTDPHLNTPQ…ERRSSGPMDF (101 aa). Position 64 is a phosphoserine (Ser-64). Phosphothreonine is present on Thr-65. Residues 75–95 are compositionally biased toward basic and acidic residues; the sequence is EQARERESSIGEHAPGAERRS. Phosphoserine is present on residues Ser-95 and Ser-96. Thr-132 bears the Phosphothreonine mark. The interval 146 to 175 is disordered; that stretch reads NSYLDNNSNGNSARVPHGSPPQLGTRRKSS. A compositionally biased stretch (polar residues) spans 148-157; sequence YLDNNSNGNS. A Phosphoserine modification is found at Ser-164.

As to quaternary structure, interacts with GDB1.

It is found in the cytoplasm. Its function is as follows. Acts as an inhibitor of GDB1, enhancing the ability of cells to store glucose as glycogen. The polypeptide is Inhibitor of glycogen debranching 1 (IGD1) (Saccharomyces cerevisiae (strain ATCC 204508 / S288c) (Baker's yeast)).